The chain runs to 142 residues: Cellulose/chitin binding protein BQ2027_MB2009 (142 aa).

The N-terminal stretch at Met1–Ala37 is a signal peptide. The CBM2 domain maps to Ala38–Thr142.

It is found in the secreted. It localises to the cell wall. The protein localises to the cell membrane. Functionally, carbohydrate binding protein that binds chitin and cellulose. Lacks enzymatic activity and does not hydrolyze chitin and cellulose. May interact with mycobacterial biofilms, which are rich in cellulose, and play a role in biofilm formation. Could also act as an adhesin, improving the initial attachment to host cells and aiding M.bovis during the initial stages of infection. In terms of biological role, may act as a virulence factor that modulates host immune responses and contributes to host immune evasion. The protein is Cellulose/chitin binding protein BQ2027_MB2009 of Mycobacterium bovis (strain ATCC BAA-935 / AF2122/97).